We begin with the raw amino-acid sequence, 271 residues long: Putative phosphoenolpyruvate synthase regulatory protein (271 aa).

ADP is bound at residue 151-158; the sequence is GVSRSGKT.

The protein belongs to the pyruvate, phosphate/water dikinase regulatory protein family. PSRP subfamily.

It carries out the reaction [pyruvate, water dikinase] + ADP = [pyruvate, water dikinase]-phosphate + AMP + H(+). It catalyses the reaction [pyruvate, water dikinase]-phosphate + phosphate + H(+) = [pyruvate, water dikinase] + diphosphate. Functionally, bifunctional serine/threonine kinase and phosphorylase involved in the regulation of the phosphoenolpyruvate synthase (PEPS) by catalyzing its phosphorylation/dephosphorylation. The sequence is that of Putative phosphoenolpyruvate synthase regulatory protein from Paraburkholderia xenovorans (strain LB400).